Reading from the N-terminus, the 216-residue chain is Ribosome maturation factor RimP (216 aa).

Belongs to the RimP family.

The protein localises to the cytoplasm. In terms of biological role, required for maturation of 30S ribosomal subunits. The sequence is that of Ribosome maturation factor RimP from Bartonella henselae (strain ATCC 49882 / DSM 28221 / CCUG 30454 / Houston 1) (Rochalimaea henselae).